The chain runs to 164 residues: HTH-type transcriptional regulator IscR (164 aa).

Residues 2-131 (RLTSKGRYAV…NNITLGELVN (130 aa)) form the HTH rrf2-type domain. The H-T-H motif DNA-binding region spans 28–51 (LADISERQGISLSYLEQLFSRLRK). C92, C98, and C104 together coordinate [2Fe-2S] cluster.

The cofactor is [2Fe-2S] cluster.

In terms of biological role, regulates the transcription of several operons and genes involved in the biogenesis of Fe-S clusters and Fe-S-containing proteins. In Salmonella choleraesuis (strain SC-B67), this protein is HTH-type transcriptional regulator IscR.